Reading from the N-terminus, the 115-residue chain is Large ribosomal subunit protein bL19 (115 aa).

Belongs to the bacterial ribosomal protein bL19 family.

Functionally, this protein is located at the 30S-50S ribosomal subunit interface and may play a role in the structure and function of the aminoacyl-tRNA binding site. The protein is Large ribosomal subunit protein bL19 of Alkaliphilus oremlandii (strain OhILAs) (Clostridium oremlandii (strain OhILAs)).